Reading from the N-terminus, the 484-residue chain is ATP-dependent rRNA helicase RRP3 (484 aa).

Positions 1 to 10 (MAIVGSNSVS) are enriched in polar residues. Residues 1 to 61 (MAIVGSNSVS…SSQKSKNIVE (61 aa)) are disordered. Residues 18 to 54 (RNDARDLAEKIKRNALKKQEQDKKQQLEEESKPESSQ) show a composition bias toward basic and acidic residues. The Q motif motif lies at 71–99 (STFSELKLVPELLEAIQQMKFSKPTPIQS). The region spanning 102–273 (IPHALEGKDI…RASLHNPVRV (172 aa)) is the Helicase ATP-binding domain. Residue 115 to 122 (AQTGSGKT) coordinates ATP. The DEAD box motif lies at 221-224 (DEAD). In terms of domain architecture, Helicase C-terminal spans 300–444 (YLIHLLNEFV…KDPSPPKAML (145 aa)). The disordered stretch occupies residues 460–484 (RQTKEFHEKTRRGRRGKDDKDREEH). A compositionally biased stretch (basic and acidic residues) spans 475-484 (GKDDKDREEH).

Belongs to the DEAD box helicase family. DDX47/RRP3 subfamily. As to quaternary structure, interacts with the SSU processome.

The protein resides in the nucleus. It carries out the reaction ATP + H2O = ADP + phosphate + H(+). Functionally, ATP-dependent rRNA helicase required for pre-ribosomal RNA processing. Involved in the maturation of the 35S-pre-rRNA and to its cleavage to mature 18S rRNA. In Scheffersomyces stipitis (strain ATCC 58785 / CBS 6054 / NBRC 10063 / NRRL Y-11545) (Yeast), this protein is ATP-dependent rRNA helicase RRP3.